The following is a 183-amino-acid chain: Cuticle protein 2 (183 aa).

An N-terminal signal peptide occupies residues 1-15; sequence MKLIVVAALIGVCAG. The Chitin-binding type R&amp;R domain maps to 58–121; it reads SQGFQYVYDT…AQGAHLPTPP (64 aa).

This is Cuticle protein 2 from Lonomia obliqua (Moth).